Consider the following 77-residue polypeptide: Bradykinin-potentiating peptide (77 aa).

The first 22 residues, 1-22 (MNKKTLLVIFIVTLLIADEVNS), serve as a signal peptide directing secretion. The propeptide occupies 74–77 (RRRR).

The protein belongs to the non-disulfide-bridged peptide (NDBP) superfamily. Long chain multifunctional peptide (group 2) family. As to expression, expressed by the venom gland.

It is found in the secreted. Its function is as follows. Antimicrobial peptide. May also inhibit angiotensin-converting enzyme (ACE) and potentiate bradykinin (BK). The chain is Bradykinin-potentiating peptide from Tityus discrepans (Venezuelan scorpion).